The chain runs to 71 residues: Serine palmitoyltransferase small subunit A (71 aa).

Topologically, residues 1-12 are cytoplasmic; sequence MAGMALARAWKQ. A helical transmembrane segment spans residues 13–29; that stretch reads MSWFYYQYLLVTALYML. At 30 to 34 the chain is on the lumenal side; sequence EPWER. The chain crosses the membrane as a helical span at residues 35 to 57; it reads TVFNSMLVSIVGMALYTGYVFMP. Residues 58–71 lie on the Cytoplasmic side of the membrane; that stretch reads QHIMAILHYFEIVQ.

Belongs to the SPTSS family. SPTSSA subfamily. As to quaternary structure, component of the serine palmitoyltransferase (SPT) complex, which is composed of SPTLC1, SPTLC2 or SPTLC3 and SPTSSA or SPTSSB. The heterodimer consisting of SPTLC1 and SPTLC2/SPTLC3 forms the catalytic core of the enzyme, while SPTSSA or SPTSSB subunits determine substrate specificity. SPT also interacts with ORMDL proteins, especially ORMDL3, which negatively regulate SPT activity in the presence of ceramides. Interacts with MBOAT7; the interaction plays a role in MBOAT7 localization to mitochondria-associated membranes.

Its subcellular location is the endoplasmic reticulum membrane. The protein operates within lipid metabolism; sphingolipid metabolism. Component of the serine palmitoyltransferase multisubunit enzyme (SPT) that catalyzes the initial and rate-limiting step in sphingolipid biosynthesis by condensing L-serine and activated acyl-CoA (most commonly palmitoyl-CoA) to form long-chain bases. The SPT complex is composed of SPTLC1, SPTLC2 or SPTLC3 and SPTSSA or SPTSSB. Within this complex, the heterodimer consisting of SPTLC1 and SPTLC2/SPTLC3 forms the catalytic core. Within the SPT complex, SPTSSA stimulates the catalytic activity and plays a role in substrate specificity, which depends upon the overall complex composition. The SPTLC1-SPTLC2-SPTSSA complex shows a strong preference for C16-CoA substrate, while the SPTLC1-SPTLC3-SPTSSA isozyme uses both C14-CoA and C16-CoA as substrates, with a slight preference for C14-CoA. Independently of its action as a SPT component, may be involved in MBOAT7 localization to mitochondria-associated membranes, a membrane bridge between the endoplasmic reticulum and mitochondria, may hence affect MBOAT7-catalyzed incorporation of arachidonic acid into phosphatidylinositol. This Homo sapiens (Human) protein is Serine palmitoyltransferase small subunit A.